The chain runs to 473 residues: Glutamate--tRNA ligase (473 aa).

The short motif at 13-23 (PSPTGFLHVGG) is the 'HIGH' region element. Positions 240-244 (KLSKR) match the 'KMSKS' region motif. Residue Lys-243 participates in ATP binding.

It belongs to the class-I aminoacyl-tRNA synthetase family. Glutamate--tRNA ligase type 1 subfamily. Monomer.

The protein resides in the cytoplasm. The catalysed reaction is tRNA(Glu) + L-glutamate + ATP = L-glutamyl-tRNA(Glu) + AMP + diphosphate. Catalyzes the attachment of glutamate to tRNA(Glu) in a two-step reaction: glutamate is first activated by ATP to form Glu-AMP and then transferred to the acceptor end of tRNA(Glu). This Shewanella denitrificans (strain OS217 / ATCC BAA-1090 / DSM 15013) protein is Glutamate--tRNA ligase.